We begin with the raw amino-acid sequence, 333 residues long: Chlorophyllide reductase 35.5 kDa chain (333 aa).

Positions 1 to 22 (MTDAPNLKGFDARLREEAAEEP) are disordered. Residues 45–50 (GSGKSF) and K74 contribute to the ATP site. Mg(2+) is bound at residue S49. [4Fe-4S] cluster-binding residues include C130 and C165. 219–220 (NK) lines the ATP pocket.

It belongs to the NifH/BchL/ChlL family. As to quaternary structure, homodimer. Chlorophyllide reductase is composed of three subunits; BchX, BchY and BchZ. Requires [4Fe-4S] cluster as cofactor.

The enzyme catalyses 3-deacetyl-3-vinylbacteriochlorophyllide a + 2 oxidized [2Fe-2S]-[ferredoxin] + ADP + phosphate = chlorophyllide a + 2 reduced [2Fe-2S]-[ferredoxin] + ATP + H2O + H(+). The catalysed reaction is bacteriochlorophyllide a + 2 oxidized [2Fe-2S]-[ferredoxin] + ADP + phosphate = 3-acetyl-3-devinylchlorophyllide a + 2 reduced [2Fe-2S]-[ferredoxin] + ATP + H2O + H(+). It carries out the reaction 3-deacetyl-3-(1-hydroxyethyl)bacteriochlorophyllide a + 2 oxidized [2Fe-2S]-[ferredoxin] + ADP + phosphate = 3-devinyl-3-(1-hydroxyethyl)chlorophyllide a + 2 reduced [2Fe-2S]-[ferredoxin] + ATP + H2O + H(+). It participates in porphyrin-containing compound metabolism; bacteriochlorophyll biosynthesis. In terms of biological role, converts chlorophylls (Chl) into bacteriochlorophylls (BChl) by reducing ring B of the tetrapyrrole. This chain is Chlorophyllide reductase 35.5 kDa chain (bchX), found in Rhodobacter capsulatus (strain ATCC BAA-309 / NBRC 16581 / SB1003).